Reading from the N-terminus, the 560-residue chain is Membrane protein insertase YidC (560 aa).

6 helical membrane-spanning segments follow: residues 5–25 (IINL…WQYF), 334–354 (AIDF…MNFF), 357–377 (YVGN…LLMF), 431–451 (LPIL…YVTI), 476–496 (LFGL…WPIL), and 522–542 (FMPL…LIYW).

This sequence belongs to the OXA1/ALB3/YidC family. Type 1 subfamily. In terms of assembly, interacts with the Sec translocase complex via SecD. Specifically interacts with transmembrane segments of nascent integral membrane proteins during membrane integration.

The protein localises to the cell inner membrane. Required for the insertion and/or proper folding and/or complex formation of integral membrane proteins into the membrane. Involved in integration of membrane proteins that insert both dependently and independently of the Sec translocase complex, as well as at least some lipoproteins. Aids folding of multispanning membrane proteins. The sequence is that of Membrane protein insertase YidC from Rickettsia massiliae (strain Mtu5).